The following is a 117-amino-acid chain: Large ribosomal subunit protein bL19 (117 aa).

It belongs to the bacterial ribosomal protein bL19 family.

In terms of biological role, this protein is located at the 30S-50S ribosomal subunit interface and may play a role in the structure and function of the aminoacyl-tRNA binding site. This chain is Large ribosomal subunit protein bL19, found in Bacteroides fragilis (strain ATCC 25285 / DSM 2151 / CCUG 4856 / JCM 11019 / LMG 10263 / NCTC 9343 / Onslow / VPI 2553 / EN-2).